Reading from the N-terminus, the 434-residue chain is Putative nuclease OPG089 (434 aa).

Mg(2+) is bound by residues aspartate 33, aspartate 74, glutamate 168, aspartate 170, aspartate 196, and aspartate 198.

The protein belongs to the XPG/RAD2 endonuclease family. FEN1 subfamily. Requires Mg(2+) as cofactor.

It localises to the virion. Its function is as follows. Putative nuclease that seems to be required for double-strand break repair, homologous recombination, and production of full-length viral genomic DNA. The protein is Putative nuclease OPG089 (OPG089) of Vaccinia virus (strain Copenhagen) (VACV).